The following is a 431-amino-acid chain: UDP-N-acetylmuramate--L-alanine ligase (431 aa).

108 to 114 (GAHGKST) provides a ligand contact to ATP.

Belongs to the MurCDEF family.

Its subcellular location is the cytoplasm. The catalysed reaction is UDP-N-acetyl-alpha-D-muramate + L-alanine + ATP = UDP-N-acetyl-alpha-D-muramoyl-L-alanine + ADP + phosphate + H(+). It functions in the pathway cell wall biogenesis; peptidoglycan biosynthesis. In terms of biological role, cell wall formation. The chain is UDP-N-acetylmuramate--L-alanine ligase from Campylobacter jejuni (strain RM1221).